The following is a 211-amino-acid chain: Guanylate kinase (211 aa).

Residues 5 to 184 enclose the Guanylate kinase-like domain; the sequence is GLLIVFSGPS…AAERVKRIIE (180 aa). 12 to 19 is a binding site for ATP; sequence GPSGVGKG.

Belongs to the guanylate kinase family.

The protein localises to the cytoplasm. It catalyses the reaction GMP + ATP = GDP + ADP. In terms of biological role, essential for recycling GMP and indirectly, cGMP. The protein is Guanylate kinase of Streptococcus pyogenes serotype M3 (strain SSI-1).